The sequence spans 241 residues: MLSSKYISVSFLLLSLSLHAVNCADPLYHFCFSQESYTATSRYGTNLNGLLNLLSTKVPSKGFGLSSTGQGQDRANGLALCRGDVSKTNCTTCVIDAGKELGNRCPYKKGAIIWYDNCLLKYSNIDFFGEIDNKNKFYMWNVQDVENPTSFNPKVKDLLSRLSNKAYANPKFYATGDLKLDSSSKLYGLAQCTRDLSGLDCKKCLDTAISELPNCCDGKRGGRVVGGSCNVRYELYPFVDA.

The first 23 residues, 1–23 (MLSSKYISVSFLLLSLSLHAVNC), serve as a signal peptide directing secretion. Gnk2-homologous domains are found at residues 25 to 127 (DPLY…NIDF) and 133 to 238 (NKNK…LYPF). 4 disulfide bridges follow: Cys81/Cys90, Cys93/Cys118, Cys192/Cys201, and Cys204/Cys229. A glycan (N-linked (GlcNAc...) asparagine) is linked at Asn89.

The protein belongs to the cysteine-rich repeat secretory protein family.

The protein resides in the secreted. Its function is as follows. Possesses antimicrobial activity toward the oomycete Phytophthora cinnamomi (ink disease agent), thus reducing its growth rate and confering an increased resistance to the plant. This Castanea crenata (Japanese chestnut) protein is Antimicrobial ginkbilobin-2-like protein.